Consider the following 640-residue polypeptide: GATA zinc finger domain-containing protein 12 (640 aa).

Disordered regions lie at residues 121 to 209 (SNNI…NIPI) and 355 to 390 (QQIR…HINN). Low complexity-rich tracts occupy residues 122–209 (NNIP…NIPI) and 355–379 (QQIR…QHQQ). Over residues 380–390 (PPTNIPQHINN) the composition is skewed to polar residues. Residues 506–531 (CVNCKTSDTPEWRRGPQGAKTLCNAC) form a GATA-type zinc finger.

This is GATA zinc finger domain-containing protein 12 (gtaL) from Dictyostelium discoideum (Social amoeba).